The chain runs to 203 residues: Small ribosomal subunit protein uS4 (203 aa).

An S4 RNA-binding domain is found at 93 to 156 (RRLDNVVYRL…MKVPAILEAV (64 aa)).

It belongs to the universal ribosomal protein uS4 family. In terms of assembly, part of the 30S ribosomal subunit. Contacts protein S5. The interaction surface between S4 and S5 is involved in control of translational fidelity.

Its function is as follows. One of the primary rRNA binding proteins, it binds directly to 16S rRNA where it nucleates assembly of the body of the 30S subunit. With S5 and S12 plays an important role in translational accuracy. The sequence is that of Small ribosomal subunit protein uS4 from Streptococcus agalactiae serotype Ia (strain ATCC 27591 / A909 / CDC SS700).